We begin with the raw amino-acid sequence, 263 residues long: 4-hydroxy-tetrahydrodipicolinate reductase (263 aa).

NAD(+)-binding positions include 7–12, 96–98, and 122–125; these read GFKGRM, GTT, and APNF. Catalysis depends on H152, which acts as the Proton donor/acceptor. (S)-2,3,4,5-tetrahydrodipicolinate is bound at residue H153. The Proton donor role is filled by K156. 162–163 is a binding site for (S)-2,3,4,5-tetrahydrodipicolinate; it reads GT.

The protein belongs to the DapB family.

The protein resides in the cytoplasm. It carries out the reaction (S)-2,3,4,5-tetrahydrodipicolinate + NAD(+) + H2O = (2S,4S)-4-hydroxy-2,3,4,5-tetrahydrodipicolinate + NADH + H(+). The enzyme catalyses (S)-2,3,4,5-tetrahydrodipicolinate + NADP(+) + H2O = (2S,4S)-4-hydroxy-2,3,4,5-tetrahydrodipicolinate + NADPH + H(+). It participates in amino-acid biosynthesis; L-lysine biosynthesis via DAP pathway; (S)-tetrahydrodipicolinate from L-aspartate: step 4/4. Functionally, catalyzes the conversion of 4-hydroxy-tetrahydrodipicolinate (HTPA) to tetrahydrodipicolinate. The polypeptide is 4-hydroxy-tetrahydrodipicolinate reductase (Listeria monocytogenes serovar 1/2a (strain ATCC BAA-679 / EGD-e)).